Consider the following 316-residue polypeptide: tRNA(Ile)-lysidine synthase (316 aa).

33-38 (SGGTDS) lines the ATP pocket.

The protein belongs to the tRNA(Ile)-lysidine synthase family.

It is found in the cytoplasm. The enzyme catalyses cytidine(34) in tRNA(Ile2) + L-lysine + ATP = lysidine(34) in tRNA(Ile2) + AMP + diphosphate + H(+). Its function is as follows. Ligates lysine onto the cytidine present at position 34 of the AUA codon-specific tRNA(Ile) that contains the anticodon CAU, in an ATP-dependent manner. Cytidine is converted to lysidine, thus changing the amino acid specificity of the tRNA from methionine to isoleucine. The chain is tRNA(Ile)-lysidine synthase from Bdellovibrio bacteriovorus (strain ATCC 15356 / DSM 50701 / NCIMB 9529 / HD100).